Here is a 184-residue protein sequence, read N- to C-terminus: Translocon-associated protein subunit beta (184 aa).

The first 20 residues, 1–20, serve as a signal peptide directing secretion; the sequence is MNFKTVISLFLVLFVSFVYC. Residues 21–147 are Lumenal-facing; sequence ENGAELLFHK…SQADYEKRTS (127 aa). An N-linked (GlcNAc...) asparagine glycan is attached at Asn-94. Residues 148-168 form a helical membrane-spanning segment; the sequence is LLIKEWITFFVLCAGAIALPY. Over 169–184 the chain is Cytoplasmic; it reads SISTYYKKNYENGIKK.

This sequence belongs to the TRAP-beta family. As to quaternary structure, heterotrimer of TRAP-alpha, TRAP-beta and TRAP-gamma.

It is found in the endoplasmic reticulum membrane. TRAP proteins are part of a complex whose function is to bind calcium to the ER membrane and thereby regulate the retention of ER resident proteins. In Dictyostelium discoideum (Social amoeba), this protein is Translocon-associated protein subunit beta (ssr2).